Here is a 1529-residue protein sequence, read N- to C-terminus: Mediator of RNA polymerase II transcription subunit 1.1 (1529 aa).

Disordered stretches follow at residues 685 to 740, 807 to 919, and 933 to 1529; these read PDAA…VVGE, QYRM…MRDN, and PDIE…IDDE. A compositionally biased stretch (basic residues) spans 693–702; it reads GKQRKPRAKK. Composition is skewed to low complexity over residues 722 to 739 and 807 to 828; these read GAAA…GVVG and QYRM…PQQQ. Over residues 894–905 the composition is skewed to pro residues; sequence TPSPLSAPPKPF. The span at 908–919 shows a compositional bias: basic and acidic residues; it reads EQHHFGTKMRDN. 2 stretches are compositionally biased toward low complexity: residues 958 to 990 and 1008 to 1023; these read SSSS…TAQT and QEQA…IQQQ. A coiled-coil region spans residues 1008 to 1032; the sequence is QEQALQKQEQQRIQQQDSVDSTNSE. Polar residues-rich tracts occupy residues 1051–1061, 1068–1089, and 1096–1105; these read NQVNRVMNMSN, GSST…STGS, and TPGTSSNIAQ. Basic and acidic residues-rich tracts occupy residues 1113 to 1130, 1137 to 1185, 1192 to 1240, and 1262 to 1278; these read LKKE…EKLI, LKVD…ERDK, RDRT…KELS, and PKKD…KDES. Residues 1169–1202 adopt a coiled-coil conformation; that stretch reads EKEDKSQREKDKKERDKERKRRDRDRTEAKKEKD. Over residues 1279–1288 the composition is skewed to low complexity; it reads IPGPSTSSES. Residues 1289 to 1304 are compositionally biased toward basic and acidic residues; that stretch reads STRKEVAPAPISRKES. The segment covering 1349-1365 has biased composition (low complexity); the sequence is SYSGSSNAGPISSSSRG. Composition is skewed to pro residues over residues 1375–1386 and 1477–1500; these read PVLPPPALPMRG and QPPP…APPS.

It belongs to the Mediator complex subunit 1 family. In terms of assembly, component of the Mediator complex.

The protein localises to the nucleus. Its function is as follows. Component of the Mediator complex, a coactivator involved in the regulated transcription of nearly all RNA polymerase II-dependent genes. Mediator functions as a bridge to convey information from gene-specific regulatory proteins to the basal RNA polymerase II transcription machinery. Mediator is recruited to promoters by direct interactions with regulatory proteins and serves as a scaffold for the assembly of a functional preinitiation complex with RNA polymerase II and the general transcription factors. In Caenorhabditis briggsae, this protein is Mediator of RNA polymerase II transcription subunit 1.1 (sop-3).